A 209-amino-acid polypeptide reads, in one-letter code: Putative 3-methyladenine DNA glycosylase (209 aa).

The protein belongs to the DNA glycosylase MPG family.

The chain is Putative 3-methyladenine DNA glycosylase from Deinococcus geothermalis (strain DSM 11300 / CIP 105573 / AG-3a).